A 139-amino-acid polypeptide reads, in one-letter code: Transcription antitermination protein NusB (139 aa).

It belongs to the NusB family.

Functionally, involved in transcription antitermination. Required for transcription of ribosomal RNA (rRNA) genes. Binds specifically to the boxA antiterminator sequence of the ribosomal RNA (rrn) operons. The sequence is that of Transcription antitermination protein NusB from Lactiplantibacillus plantarum (strain ATCC BAA-793 / NCIMB 8826 / WCFS1) (Lactobacillus plantarum).